A 443-amino-acid polypeptide reads, in one-letter code: C4-dicarboxylate transport protein (443 aa).

9 helical membrane-spanning segments follow: residues 10–30 (SLYF…HFYP), 46–66 (LIKM…IAGM), 78–98 (YALL…LIVV), 143–163 (IVGA…VIFG), 199–219 (PIGA…GSLV), 224–244 (LMIC…GGIC), 291–311 (VVGL…SIYL), 332–352 (ITLL…TGSG), and 354–374 (IVLA…LALI).

This sequence belongs to the dicarboxylate/amino acid:cation symporter (DAACS) (TC 2.A.23) family.

It is found in the cell inner membrane. In terms of biological role, responsible for the transport of dicarboxylates such as succinate, fumarate, and malate from the periplasm across the membrane. The chain is C4-dicarboxylate transport protein from Pseudomonas fluorescens (strain SBW25).